A 236-amino-acid polypeptide reads, in one-letter code: 2,3,4,5-tetrahydropyridine-2,6-dicarboxylate N-acetyltransferase (236 aa).

Belongs to the transferase hexapeptide repeat family. DapH subfamily.

The catalysed reaction is (S)-2,3,4,5-tetrahydrodipicolinate + acetyl-CoA + H2O = L-2-acetamido-6-oxoheptanedioate + CoA. The protein operates within amino-acid biosynthesis; L-lysine biosynthesis via DAP pathway; LL-2,6-diaminopimelate from (S)-tetrahydrodipicolinate (acetylase route): step 1/3. In terms of biological role, catalyzes the transfer of an acetyl group from acetyl-CoA to tetrahydrodipicolinate. This is 2,3,4,5-tetrahydropyridine-2,6-dicarboxylate N-acetyltransferase from Lactiplantibacillus plantarum (strain ATCC BAA-793 / NCIMB 8826 / WCFS1) (Lactobacillus plantarum).